Reading from the N-terminus, the 324-residue chain is G patch domain-containing protein 4 (324 aa).

Disordered regions lie at residues 1–30 (MSAS…GKGL) and 123–324 (LSGG…NKSE). The 47-residue stretch at 11–57 (GMKFAEEQMHKHGWKEGKGLGRRENGICEAIKVKVKCDHAGVGHNSA) folds into the G-patch domain. Basic and acidic residues predominate over residues 14-30 (FAEEQMHKHGWKEGKGL). Positions 131-141 (KEPSSSESSDS) are enriched in low complexity. The segment covering 186–215 (SRLEEQEREFLAKYGKKEQKNKERDEKLER) has biased composition (basic and acidic residues). Residues 244–253 (HKKKKKKRKR) are compositionally biased toward basic residues. Residues 254 to 270 (ADSERKEESQENGHEEE) show a composition bias toward basic and acidic residues. A compositionally biased stretch (polar residues) spans 296 to 309 (PSTQEEQPTESSDF). Residues 312–324 (KPKKKKKKKNKSE) show a composition bias toward basic residues.

The polypeptide is G patch domain-containing protein 4 (gpatch4) (Xenopus laevis (African clawed frog)).